A 261-amino-acid chain; its full sequence is Ribosomal RNA large subunit methyltransferase E (261 aa).

S-adenosyl-L-methionine-binding residues include G81, W83, D104, D120, and D144. Catalysis depends on K184, which acts as the Proton acceptor. Residues 233–261 (GNALGHEVEDDGPMPHDPREDATADEDQD) are disordered. Over residues 245-254 (PMPHDPREDA) the composition is skewed to basic and acidic residues.

The protein belongs to the class I-like SAM-binding methyltransferase superfamily. RNA methyltransferase RlmE family.

The protein localises to the cytoplasm. The catalysed reaction is uridine(2552) in 23S rRNA + S-adenosyl-L-methionine = 2'-O-methyluridine(2552) in 23S rRNA + S-adenosyl-L-homocysteine + H(+). Specifically methylates the uridine in position 2552 of 23S rRNA at the 2'-O position of the ribose in the fully assembled 50S ribosomal subunit. The sequence is that of Ribosomal RNA large subunit methyltransferase E from Allorhizobium ampelinum (strain ATCC BAA-846 / DSM 112012 / S4) (Agrobacterium vitis (strain S4)).